We begin with the raw amino-acid sequence, 327 residues long: Germination protease (327 aa).

The propeptide occupies 1–7 (MNSVRTD).

The protein belongs to the peptidase A25 family. Homotetramer. In terms of processing, autoproteolytically processed. The inactive tetrameric zymogen termed p46 autoprocesses to a smaller form termed p41, which is active only during spore germination.

The enzyme catalyses Endopeptidase action with P4 Glu or Asp, P1 preferably Glu &gt; Asp, P1' hydrophobic and P2' Ala.. Initiates the rapid degradation of small, acid-soluble proteins during spore germination. The polypeptide is Germination protease (Clostridium acetobutylicum (strain ATCC 824 / DSM 792 / JCM 1419 / IAM 19013 / LMG 5710 / NBRC 13948 / NRRL B-527 / VKM B-1787 / 2291 / W)).